The following is a 497-amino-acid chain: POU domain, class 3, transcription factor 3 (497 aa).

Positions 31–51 (GGGGGGGGGGGGAGGGGGGMQ) are enriched in gly residues. Disordered stretches follow at residues 31–62 (GGGG…SGAY), 121–189 (WSGS…WGAA), 230–316 (NGML…TPTS), and 458–497 (EKRM…TSVQ). Composition is skewed to pro residues over residues 133-145 (QQPP…PPQG) and 170-180 (HLGPPPPPPHQ). The segment covering 240–250 (GGGGGGAGGGA) has biased composition (gly residues). Over residues 269–286 (HHHHHHHHAHPHPPHPHH) the composition is skewed to basic residues. Positions 311–385 (EDTPTSDDLE…LLNKWLEEAD (75 aa)) constitute a POU-specific domain. Positions 403–462 (KRKKRTSIEVSVKGALESHFLKCPKPSAQEITNLADSLQLEKEVVRVWFCNRRQKEKRMT) form a DNA-binding region, homeobox. Residues 465–483 (GIQQQTPDDVYSQVGTVSA) are compositionally biased toward polar residues.

It belongs to the POU transcription factor family. Class-3 subfamily. As to quaternary structure, homodimer. Brain.

The protein resides in the nucleus. In terms of biological role, transcription factor that acts synergistically with SOX11 and SOX4. Plays a role in neuronal development. Is implicated in an enhancer activity at the embryonic met-mesencephalic junction; the enhancer element contains the octamer motif (5'-ATTTGCAT-3'). The sequence is that of POU domain, class 3, transcription factor 3 (Pou3f3) from Rattus norvegicus (Rat).